A 184-amino-acid chain; its full sequence is Ribosome maturation factor RimP (184 aa).

The protein belongs to the RimP family.

The protein resides in the cytoplasm. In terms of biological role, required for maturation of 30S ribosomal subunits. This is Ribosome maturation factor RimP from Zymomonas mobilis subsp. mobilis (strain ATCC 31821 / ZM4 / CP4).